A 406-amino-acid polypeptide reads, in one-letter code: tRNA-specific 2-thiouridylase MnmA (406 aa).

Residues 42 to 49 and leucine 68 contribute to the ATP site; that span reads GLSGGVDS. The active-site Nucleophile is cysteine 129. Cysteine 129 and cysteine 239 are oxidised to a cystine. Residue glycine 154 participates in ATP binding. An interaction with tRNA region spans residues 189–191; the sequence is KDQ. Cysteine 239 (cysteine persulfide intermediate) is an active-site residue. The tract at residues 344 to 345 is interaction with tRNA; the sequence is RY.

Belongs to the MnmA/TRMU family.

It localises to the cytoplasm. The enzyme catalyses S-sulfanyl-L-cysteinyl-[protein] + uridine(34) in tRNA + AH2 + ATP = 2-thiouridine(34) in tRNA + L-cysteinyl-[protein] + A + AMP + diphosphate + H(+). Catalyzes the 2-thiolation of uridine at the wobble position (U34) of tRNA, leading to the formation of s(2)U34. The chain is tRNA-specific 2-thiouridylase MnmA from Prochlorococcus marinus (strain SARG / CCMP1375 / SS120).